Here is a 209-residue protein sequence, read N- to C-terminus: Ribosomal RNA large subunit methyltransferase E (209 aa).

S-adenosyl-L-methionine contacts are provided by G63, W65, D83, D99, and D124. K164 acts as the Proton acceptor in catalysis.

It belongs to the class I-like SAM-binding methyltransferase superfamily. RNA methyltransferase RlmE family.

It is found in the cytoplasm. It carries out the reaction uridine(2552) in 23S rRNA + S-adenosyl-L-methionine = 2'-O-methyluridine(2552) in 23S rRNA + S-adenosyl-L-homocysteine + H(+). In terms of biological role, specifically methylates the uridine in position 2552 of 23S rRNA at the 2'-O position of the ribose in the fully assembled 50S ribosomal subunit. The chain is Ribosomal RNA large subunit methyltransferase E from Baumannia cicadellinicola subsp. Homalodisca coagulata.